A 285-amino-acid polypeptide reads, in one-letter code: Probable endonuclease 4 (285 aa).

Residues His-69, His-109, Glu-145, Asp-179, His-182, His-216, Asp-229, His-231, and Glu-261 each coordinate Zn(2+).

This sequence belongs to the AP endonuclease 2 family. It depends on Zn(2+) as a cofactor.

The enzyme catalyses Endonucleolytic cleavage to 5'-phosphooligonucleotide end-products.. Endonuclease IV plays a role in DNA repair. It cleaves phosphodiester bonds at apurinic or apyrimidinic (AP) sites, generating a 3'-hydroxyl group and a 5'-terminal sugar phosphate. This chain is Probable endonuclease 4, found in Salmonella agona (strain SL483).